We begin with the raw amino-acid sequence, 602 residues long: Oligoendopeptidase F, chromosomal (602 aa).

His-388 is a Zn(2+) binding site. Residue Glu-389 is part of the active site. 2 residues coordinate Zn(2+): His-392 and His-395.

The protein belongs to the peptidase M3B family. Zn(2+) serves as cofactor.

Functionally, hydrolyzes peptides containing between 7 and 17 amino acids with a rather wide specificity. This is Oligoendopeptidase F, chromosomal (pepF2) from Lactococcus lactis subsp. cremoris (Streptococcus cremoris).